The chain runs to 333 residues: L-lactate dehydrogenase A chain (333 aa).

Residues glycine 30–lysine 58 and arginine 100 contribute to the NAD(+) site. 3 residues coordinate substrate: arginine 107, asparagine 139, and arginine 170. Position 139 (asparagine 139) interacts with NAD(+). The active-site Proton acceptor is histidine 194. Position 249 (threonine 249) interacts with substrate.

This sequence belongs to the LDH/MDH superfamily. LDH family. Homotetramer.

It is found in the cytoplasm. It carries out the reaction (S)-lactate + NAD(+) = pyruvate + NADH + H(+). It participates in fermentation; pyruvate fermentation to lactate; (S)-lactate from pyruvate: step 1/1. In terms of biological role, interconverts simultaneously and stereospecifically pyruvate and lactate with concomitant interconversion of NADH and NAD(+). This Danio rerio (Zebrafish) protein is L-lactate dehydrogenase A chain (ldha).